The primary structure comprises 29 residues: Myosin heavy chain, muscle (29 aa).

Basic and acidic residues predominate over residues 1 to 16; that stretch reads SKYESEGVARSEELQE. The disordered stretch occupies residues 1–29; it reads SKYESEGVARSEELQEVHQAFADAGRKPI.

In terms of assembly, muscle myosin is a hexameric protein that consists of 2 heavy chain subunits (MHC), 2 alkali light chain subunits (MLC) and 2 regulatory light chain subunits (MLC-2).

Its subcellular location is the cytoplasm. It localises to the myofibril. Muscle contraction. The chain is Myosin heavy chain, muscle from Bombyx mori (Silk moth).